Reading from the N-terminus, the 592-residue chain is MSRHRDVKNLDLDDYELDEEPGEEELTEEQEEEFRSAVATVRETLLGVPISEKEIADTVWYYYFDVEKSVNYLLQKASSKAGAKEKQNTDSQKEKKQNKSKEALADAKDPLDESSNGIKNLSLNKNDEPAFQTNGEVKMKNSSESDNQPEKKKIKKQNPTDLVSVPEIFEQSNPKPVVHLVVTGHVDSGKSTMLGRIMFELGEINSRSMQKLHNEAANSGKGSFSYAWLLDTTEEERARGVTMDVASTTFESDKKIYEIGDAPGHRDFISGMIAGASSADFAVLVVDSSQNNFERGFLENGQTREHAYLLRALGISEIVVSVNKLDLMSWSEDRFQEIKNIVSDFLIKMVGFKTSNVHFVPISAISGTNLIQKDSSDLYKWYKGPTLLSALDQLVPPEKPYRKPLRLSIDDVYRSPRSVTVTGRVEAGNVQVNQVLYDVSSQEDAYVKNVIRNSDPSSTWAVAGDTVTLQLADIEVNQLRPGDILSNYENPVRRVRSFVAEIQTFDIHGPILSGSTLVLHLGRTVTSVSLKIVTVNNKRSRHIASRKRALVRISFLDGLFPLCLAEECPALGRFILRRSGDTVAAGIVKELC.

Disordered stretches follow at residues 1–35 (MSRHRDVKNLDLDDYELDEEPGEEELTEEQEEEFR) and 78–159 (SSKA…KQNP). A compositionally biased stretch (acidic residues) spans 12-32 (LDDYELDEEPGEEELTEEQEE). The span at 82-111 (GAKEKQNTDSQKEKKQNKSKEALADAKDPL) shows a compositional bias: basic and acidic residues. Residues 113-124 (ESSNGIKNLSLN) are compositionally biased toward polar residues. Residues 137–151 (VKMKNSSESDNQPEK) are compositionally biased toward basic and acidic residues. The tr-type G domain maps to 175 to 401 (KPVVHLVVTG…DQLVPPEKPY (227 aa)). Positions 184–191 (GHVDSGKS) are G1. 184-191 (GHVDSGKS) serves as a coordination point for GTP. The G2 stretch occupies residues 240 to 244 (GVTMD). Residues 261 to 264 (DAPG) form a G3 region. GTP-binding positions include 323-326 (NKLD) and 352-355 (FKTS). The G4 stretch occupies residues 323–326 (NKLD). The segment at 363–365 (SAI) is G5.

The protein belongs to the TRAFAC class translation factor GTPase superfamily. Classic translation factor GTPase family. Component of the Dom34-Hbs1 complex, also named Pelota-HBS1L complex, composed of dom34 and hbs1.

The protein localises to the cytoplasm. It carries out the reaction GTP + H2O = GDP + phosphate + H(+). In terms of biological role, GTPase component of the Dom34-Hbs1 complex, a complex that recognizes stalled ribosomes and triggers the No-Go Decay (NGD) pathway. The Dom34-Hbs1 complex recognizes ribosomes stalled at the 3' end of an mRNA and engages stalled ribosomes by destabilizing mRNA in the mRNA channel. Following ribosome-binding, the Pelota-HBS1L complex promotes the disassembly of stalled ribosomes, followed by degradation of damaged mRNAs as part of the NGD pathway. This chain is Elongation factor 1 alpha-like protein, found in Schizosaccharomyces pombe (strain 972 / ATCC 24843) (Fission yeast).